Consider the following 285-residue polypeptide: MHIIKTIKVLYKEIKILKKSNKKIGLVPTMGNLHDGHIKLILLAKKYSDIIIVSIFINPMQFDNLSDLKNYPKTFMKDSIILKKYHVDILFFPHINEIYPNGIEHQTFVEVIKLSKILEGQSRPGHFRGVTTIITKLFNFIQPDFAFFGEKDYQQLLIIKILVKELNYMIKIISLPTIRLKNGLALSSRNNYLSSQENEIAPYLYKIIKKTCEKIIKEDDNIRPKIIHESKILLIKKGFSVDIFDIYDYKNLEHPSKKVKKVILLASVWLGNTRLIDNKKIILNY.

Residue 30 to 37 participates in ATP binding; that stretch reads MGNLHDGH. The active-site Proton donor is the His37. Gln61 provides a ligand contact to (R)-pantoate. Gln61 lines the beta-alanine pocket. Residue 149 to 152 coordinates ATP; that stretch reads GEKD. A (R)-pantoate-binding site is contributed by Gln155. Residues Ile178 and 186 to 189 contribute to the ATP site; that span reads LSSR.

It belongs to the pantothenate synthetase family. Homodimer.

The protein resides in the cytoplasm. It catalyses the reaction (R)-pantoate + beta-alanine + ATP = (R)-pantothenate + AMP + diphosphate + H(+). It participates in cofactor biosynthesis; (R)-pantothenate biosynthesis; (R)-pantothenate from (R)-pantoate and beta-alanine: step 1/1. Functionally, catalyzes the condensation of pantoate with beta-alanine in an ATP-dependent reaction via a pantoyl-adenylate intermediate. The sequence is that of Pantothenate synthetase from Buchnera aphidicola subsp. Acyrthosiphon pisum (strain 5A).